Reading from the N-terminus, the 118-residue chain is MNKNDSRLRRARQTRLKIAELSVARLAVHRTNLHIYAQVFSEDGTKVLASASTAEAEVRKELNGNGGNTAAATLVGKRIAEKAKAAGIEAVAFDRSGFRYHGRVKALADAAREAGLKF.

The protein belongs to the universal ribosomal protein uL18 family. In terms of assembly, part of the 50S ribosomal subunit; part of the 5S rRNA/L5/L18/L25 subcomplex. Contacts the 5S and 23S rRNAs.

Its function is as follows. This is one of the proteins that bind and probably mediate the attachment of the 5S RNA into the large ribosomal subunit, where it forms part of the central protuberance. This chain is Large ribosomal subunit protein uL18, found in Ralstonia pickettii (strain 12J).